The sequence spans 148 residues: Lysozyme C (148 aa).

Residues 1-18 (MKVLVILGLVLLSVMVQG) form the signal peptide. In terms of domain architecture, C-type lysozyme spans 19-148 (KVFERCELAR…VSQYVQGCGV (130 aa)). 4 disulfides stabilise this stretch: cysteine 24/cysteine 146, cysteine 48/cysteine 134, cysteine 83/cysteine 99, and cysteine 95/cysteine 113. Residues glutamate 53 and aspartate 71 contribute to the active site.

It belongs to the glycosyl hydrolase 22 family. As to quaternary structure, monomer.

The protein resides in the secreted. The catalysed reaction is Hydrolysis of (1-&gt;4)-beta-linkages between N-acetylmuramic acid and N-acetyl-D-glucosamine residues in a peptidoglycan and between N-acetyl-D-glucosamine residues in chitodextrins.. Functionally, lysozymes have primarily a bacteriolytic function; those in tissues and body fluids are associated with the monocyte-macrophage system and enhance the activity of immunoagents. The chain is Lysozyme C (LYZ) from Saimiri sciureus (Common squirrel monkey).